The sequence spans 107 residues: UPF0213 protein SG0387 (107 aa).

The region spanning 4–79 (SLWHLYLIRT…KQLSRAQKEH (76 aa)) is the GIY-YIG domain.

This sequence belongs to the UPF0213 family.

In Sodalis glossinidius (strain morsitans), this protein is UPF0213 protein SG0387.